We begin with the raw amino-acid sequence, 957 residues long: ERC protein 2 (957 aa).

Over residues 1–13 (MYGSARTITNLEG) the composition is skewed to polar residues. Residues 1 to 44 (MYGSARTITNLEGSPSRSPRLPRSPRLGHRRTSSGGGGGTGKTL) form a disordered region. A compositionally biased stretch (low complexity) spans 14-25 (SPSRSPRLPRSP). A phosphoserine mark is found at Ser65 and Ser666. A coiled-coil region spans residues 140 to 917 (RQVRDSTMLD…RMKLMADNYD (778 aa)). Residues 918–957 (DDHHHYHHHHHHHHHRSPGRSQHSNHRPSPDQDDEEGIWA) form a disordered region. Positions 922–943 (HYHHHHHHHHHRSPGRSQHSNH) are enriched in basic residues. The span at 948-957 (DQDDEEGIWA) shows a compositional bias: acidic residues.

In terms of assembly, interacts with BSN, ERC1, PPFIA1, PPFIA2, PPFIA3 and PPFIA4. Interacts through its C-terminus with the PDZ domain of RIMS1. Part of a complex consisting of ERC2, RIMS1 and UNC13A.

The protein resides in the cytoplasm. The protein localises to the synapse. Its subcellular location is the presynaptic active zone. It is found in the cytoskeleton. In terms of biological role, thought to be involved in the organization of the cytomatrix at the nerve terminals active zone (CAZ) which regulates neurotransmitter release. Seems to act together with BSN. May recruit liprin-alpha proteins to the CAZ. The chain is ERC protein 2 (ERC2) from Homo sapiens (Human).